A 792-amino-acid chain; its full sequence is Protocadherin beta-18 (792 aa).

An N-terminal signal peptide occupies residues 1-26 (MAARGSCVSRQRQVLFLFLLGGLCLA). Cadherin domains lie at 27–133 (GSEL…SPIF), 134–242 (QDKK…APQF), 243–347 (PQEL…APEL), 348–451 (IMSS…APAF), 452–561 (NQTS…APFV), and 568–676 (ASAP…LPEV). N-linked (GlcNAc...) asparagine glycosylation occurs at asparagine 169. 2 N-linked (GlcNAc...) asparagine glycosylation sites follow: asparagine 418 and asparagine 452. The chain crosses the membrane as a helical span at residues 693 to 713 (VIALASVSSLFLLSVLLFVGV).

It is found in the cell membrane. Its function is as follows. Potential calcium-dependent cell-adhesion protein. The chain is Protocadherin beta-18 (Pcdhb18) from Mus musculus (Mouse).